Consider the following 551-residue polypeptide: uncharacterized protein (551 aa).

Disordered stretches follow at residues 66 to 111 (GNNK…STNL), 130 to 165 (PEATGLMKEDITPVVNTSKQSSTGTQEESSKPEKSN), 180 to 229 (AFNP…LSNL), and 277 to 303 (AFTSPRLPSPPQSTRPSSTRFPSVPLS). Ser-74 carries the phosphoserine modification. Polar residues-rich tracts occupy residues 92–111 (GFSNRESMSENCFSKSSTNL) and 143–156 (VVNTSKQSSTGTQE). Low complexity predominate over residues 182–193 (NPSSVLPSNSSS). Over residues 204-226 (KETYQPNTFRRSPLKNDTGSVEL) the composition is skewed to polar residues. Over residues 290–299 (TRPSSTRFPS) the composition is skewed to low complexity.

This is an uncharacterized protein from Schizosaccharomyces pombe (strain 972 / ATCC 24843) (Fission yeast).